The primary structure comprises 1279 residues: ATP-dependent helicase/nuclease subunit A (1279 aa).

In terms of domain architecture, UvrD-like helicase ATP-binding spans 4–499 (TKWTDEQRQA…VKLFKNFRSR (496 aa)). An ATP-binding site is contributed by 25 to 32 (AGAGAGKT). The UvrD-like helicase C-terminal domain maps to 526–853 (EEALKVGASY…RIMSIHKSKG (328 aa)).

It belongs to the helicase family. AddA subfamily. As to quaternary structure, heterodimer of AddA and AddB/RexB. Requires Mg(2+) as cofactor.

It catalyses the reaction Couples ATP hydrolysis with the unwinding of duplex DNA by translocating in the 3'-5' direction.. The catalysed reaction is ATP + H2O = ADP + phosphate + H(+). In terms of biological role, the heterodimer acts as both an ATP-dependent DNA helicase and an ATP-dependent, dual-direction single-stranded exonuclease. Recognizes the chi site generating a DNA molecule suitable for the initiation of homologous recombination. The AddA nuclease domain is required for chi fragment generation; this subunit has the helicase and 3' -&gt; 5' nuclease activities. This Clostridium botulinum (strain Okra / Type B1) protein is ATP-dependent helicase/nuclease subunit A.